The primary structure comprises 246 residues: Octanoyltransferase (246 aa).

The BPL/LPL catalytic domain maps to 38 to 213 (AQQSDEFWVL…FLAKRLGLTP (176 aa)). Substrate is bound by residues 77–84 (RGGQVTYH), 144–146 (SLG), and 157–159 (GLA). Cysteine 175 acts as the Acyl-thioester intermediate in catalysis. The disordered stretch occupies residues 225 to 246 (RQENVTTGGDPGSALTQQPERL).

Belongs to the LipB family.

The protein resides in the cytoplasm. The enzyme catalyses octanoyl-[ACP] + L-lysyl-[protein] = N(6)-octanoyl-L-lysyl-[protein] + holo-[ACP] + H(+). It functions in the pathway protein modification; protein lipoylation via endogenous pathway; protein N(6)-(lipoyl)lysine from octanoyl-[acyl-carrier-protein]: step 1/2. Functionally, catalyzes the transfer of endogenously produced octanoic acid from octanoyl-acyl-carrier-protein onto the lipoyl domains of lipoate-dependent enzymes. Lipoyl-ACP can also act as a substrate although octanoyl-ACP is likely to be the physiological substrate. This is Octanoyltransferase from Alcanivorax borkumensis (strain ATCC 700651 / DSM 11573 / NCIMB 13689 / SK2).